Here is a 381-residue protein sequence, read N- to C-terminus: Homoserine O-succinyltransferase (381 aa).

The AB hydrolase-1 domain occupies 45 to 360; it reads NAVLVCHALN…PHGHDAFLLD (316 aa). Residue S151 is the Nucleophile of the active site. R221 serves as a coordination point for substrate. Active-site residues include D321 and H354. D355 provides a ligand contact to substrate.

This sequence belongs to the AB hydrolase superfamily. MetX family. In terms of assembly, homodimer.

Its subcellular location is the cytoplasm. The catalysed reaction is L-homoserine + succinyl-CoA = O-succinyl-L-homoserine + CoA. Its pathway is amino-acid biosynthesis; L-methionine biosynthesis via de novo pathway; O-succinyl-L-homoserine from L-homoserine: step 1/1. In terms of biological role, transfers a succinyl group from succinyl-CoA to L-homoserine, forming succinyl-L-homoserine. The chain is Homoserine O-succinyltransferase from Burkholderia ambifaria (strain ATCC BAA-244 / DSM 16087 / CCUG 44356 / LMG 19182 / AMMD) (Burkholderia cepacia (strain AMMD)).